Reading from the N-terminus, the 501-residue chain is Ribose import ATP-binding protein RbsA (501 aa).

ABC transporter domains are found at residues 5 to 241 (LELK…VGRK) and 249 to 495 (LNLP…VGKQ). Residue 37–44 (GENGAGKS) coordinates ATP.

The protein belongs to the ABC transporter superfamily. Ribose importer (TC 3.A.1.2.1) family. As to quaternary structure, the complex is composed of an ATP-binding protein (RbsA), two transmembrane proteins (RbsC) and a solute-binding protein (RbsB).

The protein localises to the cell inner membrane. It carries out the reaction D-ribose(out) + ATP + H2O = D-ribose(in) + ADP + phosphate + H(+). Part of the ABC transporter complex RbsABC involved in ribose import. Responsible for energy coupling to the transport system. This chain is Ribose import ATP-binding protein RbsA, found in Photorhabdus laumondii subsp. laumondii (strain DSM 15139 / CIP 105565 / TT01) (Photorhabdus luminescens subsp. laumondii).